The chain runs to 335 residues: MIEVDRIVSANAKVDDEYIDRAIRPKLLSDYIGQPQVREQMEIFIQAAKLRQDALDHLLIFGPPGLGKTTLANIVANEMGVNIRTTSGPVLEKAGDLAAMLTNLEPHDVLFIDEIHRLSPAIEEVLYPAMEDYQLDIMIGEGPAARSIKLDLPPFTLIGATTRAGSLTSPLRDRFGIVQRLEFYSVEDLASIVTRSAVCLQLEIDVEAGQEIACRSRGTPRIANRLLRRVRDYADVKNGGKITALIAQEALKMLDVDLAGFDFMDRKLLQAIIERFDGGPVGLDNLAAAIGEERDTIEDVLEPYLIQQGFLQRTPRGRIATSRTYRHFGLEQIEK.

A large ATPase domain (RuvB-L) region spans residues 4–184; that stretch reads VDRIVSANAK…FGIVQRLEFY (181 aa). ATP is bound by residues isoleucine 23, arginine 24, glycine 65, lysine 68, threonine 69, threonine 70, 131-133, arginine 174, tyrosine 184, and arginine 221; that span reads EDY. Position 69 (threonine 69) interacts with Mg(2+). A small ATPAse domain (RuvB-S) region spans residues 185 to 255; it reads SVEDLASIVT…IAQEALKMLD (71 aa). The tract at residues 258–335 is head domain (RuvB-H); sequence LAGFDFMDRK…RHFGLEQIEK (78 aa). Arginine 294, arginine 313, and arginine 318 together coordinate DNA.

Belongs to the RuvB family. Homohexamer. Forms an RuvA(8)-RuvB(12)-Holliday junction (HJ) complex. HJ DNA is sandwiched between 2 RuvA tetramers; dsDNA enters through RuvA and exits via RuvB. An RuvB hexamer assembles on each DNA strand where it exits the tetramer. Each RuvB hexamer is contacted by two RuvA subunits (via domain III) on 2 adjacent RuvB subunits; this complex drives branch migration. In the full resolvosome a probable DNA-RuvA(4)-RuvB(12)-RuvC(2) complex forms which resolves the HJ.

The protein resides in the cytoplasm. The catalysed reaction is ATP + H2O = ADP + phosphate + H(+). The RuvA-RuvB-RuvC complex processes Holliday junction (HJ) DNA during genetic recombination and DNA repair, while the RuvA-RuvB complex plays an important role in the rescue of blocked DNA replication forks via replication fork reversal (RFR). RuvA specifically binds to HJ cruciform DNA, conferring on it an open structure. The RuvB hexamer acts as an ATP-dependent pump, pulling dsDNA into and through the RuvAB complex. RuvB forms 2 homohexamers on either side of HJ DNA bound by 1 or 2 RuvA tetramers; 4 subunits per hexamer contact DNA at a time. Coordinated motions by a converter formed by DNA-disengaged RuvB subunits stimulates ATP hydrolysis and nucleotide exchange. Immobilization of the converter enables RuvB to convert the ATP-contained energy into a lever motion, pulling 2 nucleotides of DNA out of the RuvA tetramer per ATP hydrolyzed, thus driving DNA branch migration. The RuvB motors rotate together with the DNA substrate, which together with the progressing nucleotide cycle form the mechanistic basis for DNA recombination by continuous HJ branch migration. Branch migration allows RuvC to scan DNA until it finds its consensus sequence, where it cleaves and resolves cruciform DNA. The polypeptide is Holliday junction branch migration complex subunit RuvB (Histophilus somni (strain 129Pt) (Haemophilus somnus)).